The sequence spans 139 residues: Translation initiation factor 2 subunit beta (139 aa).

The protein belongs to the eIF-2-beta/eIF-5 family. As to quaternary structure, heterotrimer composed of an alpha, a beta and a gamma chain.

Functionally, eIF-2 functions in the early steps of protein synthesis by forming a ternary complex with GTP and initiator tRNA. The chain is Translation initiation factor 2 subunit beta from Sulfurisphaera tokodaii (strain DSM 16993 / JCM 10545 / NBRC 100140 / 7) (Sulfolobus tokodaii).